Consider the following 334-residue polypeptide: Phospho-N-acetylmuramoyl-pentapeptide-transferase (334 aa).

10 helical membrane-spanning segments follow: residues 2–22 (IPVLVAAGVAFLVTLVLGPVV), 55–75 (VIFLFGAAAAVLVVAFLPGGV), 78–98 (GWIEGLLVLAVALGFGVLGFM), 116–136 (EKLLGQVLIAVALAVTAVFVL), 154–174 (GLALDLGWWFFLGVTVFVVLA), 187–207 (GLAAGTFAVAALAFAMIALVM), 211–231 (WVGIVLGALVGGCVGFLCYNF), 236–256 (VFMGDTGSLALGGGLSAAAVI), 262–282 (FLLIIGGVFVIETLSVIIQVI), and 311–331 (VVLTFWTVGLVLAVLGLAGLK).

The protein belongs to the glycosyltransferase 4 family. MraY subfamily. Mg(2+) is required as a cofactor.

It is found in the cell membrane. It carries out the reaction UDP-N-acetyl-alpha-D-muramoyl-L-alanyl-gamma-D-glutamyl-meso-2,6-diaminopimeloyl-D-alanyl-D-alanine + di-trans,octa-cis-undecaprenyl phosphate = di-trans,octa-cis-undecaprenyl diphospho-N-acetyl-alpha-D-muramoyl-L-alanyl-D-glutamyl-meso-2,6-diaminopimeloyl-D-alanyl-D-alanine + UMP. It participates in cell wall biogenesis; peptidoglycan biosynthesis. In terms of biological role, catalyzes the initial step of the lipid cycle reactions in the biosynthesis of the cell wall peptidoglycan: transfers peptidoglycan precursor phospho-MurNAc-pentapeptide from UDP-MurNAc-pentapeptide onto the lipid carrier undecaprenyl phosphate, yielding undecaprenyl-pyrophosphoryl-MurNAc-pentapeptide, known as lipid I. The sequence is that of Phospho-N-acetylmuramoyl-pentapeptide-transferase from Desulforudis audaxviator (strain MP104C).